Here is a 364-residue protein sequence, read N- to C-terminus: Mannose-1-phosphate guanyltransferase (364 aa).

Belongs to the transferase hexapeptide repeat family.

Its subcellular location is the cytoplasm. It carries out the reaction alpha-D-mannose 1-phosphate + GTP + H(+) = GDP-alpha-D-mannose + diphosphate. It functions in the pathway nucleotide-sugar biosynthesis; GDP-alpha-D-mannose biosynthesis; GDP-alpha-D-mannose from alpha-D-mannose 1-phosphate (GTP route): step 1/1. Functionally, involved in cell wall synthesis where it is required for glycosylation. Involved in cell cycle progression through cell-size checkpoint. This chain is Mannose-1-phosphate guanyltransferase (mpg1), found in Aspergillus oryzae (strain ATCC 42149 / RIB 40) (Yellow koji mold).